The chain runs to 140 residues: Mercuric transport protein MerC (140 aa).

Residues Gly2–Lys10 lie on the Cytoplasmic side of the membrane. The chain crosses the membrane as a helical span at residues Thr11–Ala31. Residues Gly22 and Ala25 each contribute to the Hg(2+) site. Residues Ser32 to Glu46 lie on the Periplasmic side of the membrane. Residues Gly47–Leu67 traverse the membrane as a helical segment. Residues Gly68–Ser78 lie on the Cytoplasmic side of the membrane. Residues Leu79–Trp99 form a helical membrane-spanning segment. Topologically, residues Trp100 to Tyr106 are periplasmic. Residues Val107 to Arg127 traverse the membrane as a helical segment. The Cytoplasmic portion of the chain corresponds to Cys128–Leu140.

Its subcellular location is the cell inner membrane. With respect to regulation, uptake of Hg(2+) is decreased by iodoacetamide and iodoacetate, and is completely inhibited by the thiol-modifying reagent N-ethylmaleimide (NEM). Its function is as follows. Involved in mercuric ion uptake and binding. MerC-mediated Hg(2+) uptake does not require MerP. The protein is Mercuric transport protein MerC of Shigella flexneri.